A 445-amino-acid polypeptide reads, in one-letter code: Cyclic GMP-AMP synthase-like receptor 1 (445 aa).

Mg(2+) contacts are provided by glutamate 70, aspartate 72, and aspartate 186. An ATP-binding site is contributed by 70–72; the sequence is EYD. GTP-binding positions include aspartate 186 and 232–239; that span reads RTSFYEAE. ATP contacts are provided by residues 236–239, lysine 257, and 270–274; these read YEAE and SYHIK. The disordered stretch occupies residues 357–445; it reads LNDDNENSVH…KSKTTTPKPS (89 aa). Residues 377 to 398 show a composition bias toward basic and acidic residues; that stretch reads QKMEKTSTESEQKKPTETKPNA. Over residues 435–445 the composition is skewed to low complexity; it reads TKSKTTTPKPS.

This sequence belongs to the mab-21 family. Requires Mg(2+) as cofactor. Mn(2+) is required as a cofactor.

It catalyses the reaction GTP + ATP = 3',2'-cGAMP + 2 diphosphate. The enzyme catalyses GTP + ATP = pppA(2'-5')pG + diphosphate. It carries out the reaction pppA(2'-5')pG = 3',2'-cGAMP + diphosphate. Its activity is regulated as follows. The enzyme activity is specifically activated by double-stranded RNA (dsRNA). Functionally, nucleotidyltransferase that catalyzes the formation of cyclic GMP-AMP (3',2'-cGAMP) from ATP and GTP and plays a key role in innate immunity. Synthesizes 3',2'-cGAMP in a two-step reaction through production of the linear intermediate pppA(2'-5')pG. Acts as a key sensor of double-stranded RNA (dsRNA), the presence of dsRNA in the cytoplasm being a danger signal that triggers the immune responses. Directly binds dsRNA, activating the nucleotidyltransferase activity, leading to synthesis of 3',2'-cGAMP, a second messenger that binds to and activates Sting, thereby triggering the antiviral immune response via activation of the NF-kappa-B transcription factor Rel (Relish). This chain is Cyclic GMP-AMP synthase-like receptor 1, found in Drosophila erecta (Fruit fly).